A 315-amino-acid chain; its full sequence is 4-hydroxy-3-methylbut-2-enyl diphosphate reductase (315 aa).

Position 12 (Cys-12) interacts with [4Fe-4S] cluster. His-41 and His-74 together coordinate (2E)-4-hydroxy-3-methylbut-2-enyl diphosphate. Dimethylallyl diphosphate contacts are provided by His-41 and His-74. His-41 and His-74 together coordinate isopentenyl diphosphate. Residue Cys-96 participates in [4Fe-4S] cluster binding. His-124 is a binding site for (2E)-4-hydroxy-3-methylbut-2-enyl diphosphate. His-124 provides a ligand contact to dimethylallyl diphosphate. His-124 contributes to the isopentenyl diphosphate binding site. Glu-126 (proton donor) is an active-site residue. Thr-168 lines the (2E)-4-hydroxy-3-methylbut-2-enyl diphosphate pocket. Residue Cys-198 coordinates [4Fe-4S] cluster. (2E)-4-hydroxy-3-methylbut-2-enyl diphosphate is bound by residues Ser-226, Ser-227, Asn-228, and Ser-270. Dimethylallyl diphosphate contacts are provided by Ser-226, Ser-227, Asn-228, and Ser-270. Isopentenyl diphosphate is bound by residues Ser-226, Ser-227, Asn-228, and Ser-270.

Belongs to the IspH family. It depends on [4Fe-4S] cluster as a cofactor.

The catalysed reaction is isopentenyl diphosphate + 2 oxidized [2Fe-2S]-[ferredoxin] + H2O = (2E)-4-hydroxy-3-methylbut-2-enyl diphosphate + 2 reduced [2Fe-2S]-[ferredoxin] + 2 H(+). It catalyses the reaction dimethylallyl diphosphate + 2 oxidized [2Fe-2S]-[ferredoxin] + H2O = (2E)-4-hydroxy-3-methylbut-2-enyl diphosphate + 2 reduced [2Fe-2S]-[ferredoxin] + 2 H(+). It functions in the pathway isoprenoid biosynthesis; dimethylallyl diphosphate biosynthesis; dimethylallyl diphosphate from (2E)-4-hydroxy-3-methylbutenyl diphosphate: step 1/1. The protein operates within isoprenoid biosynthesis; isopentenyl diphosphate biosynthesis via DXP pathway; isopentenyl diphosphate from 1-deoxy-D-xylulose 5-phosphate: step 6/6. In terms of biological role, catalyzes the conversion of 1-hydroxy-2-methyl-2-(E)-butenyl 4-diphosphate (HMBPP) into a mixture of isopentenyl diphosphate (IPP) and dimethylallyl diphosphate (DMAPP). Acts in the terminal step of the DOXP/MEP pathway for isoprenoid precursor biosynthesis. The protein is 4-hydroxy-3-methylbut-2-enyl diphosphate reductase of Pseudomonas savastanoi pv. phaseolicola (strain 1448A / Race 6) (Pseudomonas syringae pv. phaseolicola (strain 1448A / Race 6)).